The primary structure comprises 282 residues: Undecaprenyl-diphosphatase (282 aa).

5 consecutive transmembrane segments (helical) span residues 90 to 110 (YRLG…GLFF), 121 to 141 (LWVV…AEYV), 194 to 214 (FGFL…LPDA), 228 to 248 (QLLV…AWLL), and 256 to 276 (MYWF…LLAT).

Belongs to the UppP family.

It localises to the cell membrane. It catalyses the reaction di-trans,octa-cis-undecaprenyl diphosphate + H2O = di-trans,octa-cis-undecaprenyl phosphate + phosphate + H(+). In terms of biological role, catalyzes the dephosphorylation of undecaprenyl diphosphate (UPP). Confers resistance to bacitracin. The polypeptide is Undecaprenyl-diphosphatase (Mycobacterium tuberculosis (strain ATCC 25618 / H37Rv)).